Here is a 164-residue protein sequence, read N- to C-terminus: Phosphopantetheine adenylyltransferase (164 aa).

Serine 9 contacts substrate. ATP-binding positions include 9 to 10 and histidine 17; that span reads SF. Residues lysine 41, valine 78, and arginine 92 each coordinate substrate. Residues 93–95, glutamate 103, and 128–134 each bind ATP; these read GLR and SRPITAT.

It belongs to the bacterial CoaD family. In terms of assembly, homohexamer. Mg(2+) is required as a cofactor.

It is found in the cytoplasm. The enzyme catalyses (R)-4'-phosphopantetheine + ATP + H(+) = 3'-dephospho-CoA + diphosphate. Its pathway is cofactor biosynthesis; coenzyme A biosynthesis; CoA from (R)-pantothenate: step 4/5. In terms of biological role, reversibly transfers an adenylyl group from ATP to 4'-phosphopantetheine, yielding dephospho-CoA (dPCoA) and pyrophosphate. The chain is Phosphopantetheine adenylyltransferase from Rhizobium leguminosarum bv. trifolii (strain WSM2304).